Reading from the N-terminus, the 415-residue chain is MAEYCTYEKYVFKKQLETLKSKNGRSTELISLYIPPDKQISDVTKHLREEHEQASNIISKLIRNNVQEALHSLLAKLRSLHKIPENGIVYFTGTVDTGANRTGMVNEVLFPPEPVADYIYRCDSVFYLEPLEEMLRECTTYGLLLLDLREATIGMLVGRQTEVIKHLHSTVPGKQRKGGQSAHRFEQLRRIAIHDFYKRIGDATSEAFLELDPAELKGILIGGHSPTKEEFNEGGFLHYELQKKVLGLFDTGYTDESGFSELINAAEETLQSIDLLKQKKDMEIFFKEIATESGKISYGEDNVRANLEIKAVDVLLLSEELRAERVTLKCRVCGYENKRTRKWKTGEAVPAIGHCPECDSELEVTDVIDTVGELSELADKGDARIAFISTDFDEGSQLMIAFGGIAAILRYNTGV.

This sequence belongs to the eukaryotic release factor 1 family. As to quaternary structure, heterodimer of two subunits, one of which binds GTP.

It localises to the cytoplasm. In terms of biological role, directs the termination of nascent peptide synthesis (translation) in response to the termination codons UAA, UAG and UGA. The chain is Peptide chain release factor subunit 1-2 from Methanosarcina acetivorans (strain ATCC 35395 / DSM 2834 / JCM 12185 / C2A).